Reading from the N-terminus, the 519-residue chain is Histidine--tRNA ligase (519 aa).

This sequence belongs to the class-II aminoacyl-tRNA synthetase family. In terms of assembly, homodimer.

It localises to the cytoplasm. It carries out the reaction tRNA(His) + L-histidine + ATP = L-histidyl-tRNA(His) + AMP + diphosphate + H(+). This is Histidine--tRNA ligase from Rhodopseudomonas palustris (strain BisB18).